We begin with the raw amino-acid sequence, 823 residues long: Polyadenylation and cleavage factor homolog 11 (823 aa).

Residues 3–135 enclose the CID domain; sequence SVESAARDYR…ELDMKINKLD (133 aa). 5 disordered regions span residues 142–176, 188–301, 340–395, 570–643, and 728–755; these read NPQTGRALRDDPQVMAPSQSRPAGNATSPAASTST, SSTP…KTLK, SSAP…LPAP, LPAP…EKRS, and WLTPRASDETNEQEADKPEEPLPGVASS. 2 stretches are compositionally biased toward polar residues: residues 157–176 and 188–198; these read APSQSRPAGNATSPAASTST and SSTPGAASASK. Residues 200-226 show a composition bias toward basic and acidic residues; that stretch reads VVEKTKSPGTVNKEKQVKKEPKQDPLD. 2 stretches are compositionally biased toward low complexity: residues 227–242 and 342–353; these read KLLPSSSASKTSSSPA and APPFQHPQQHHP. Residues 374 to 390 show a composition bias toward pro residues; that stretch reads PQDPAPIVPVQAPPPQQ. Residues 571–581 are compositionally biased toward low complexity; that stretch reads PAPARSPSSPR. The segment covering 609–624 has biased composition (polar residues); it reads QPQQNARWGGANKQQN.

In Caenorhabditis elegans, this protein is Polyadenylation and cleavage factor homolog 11 (pcf-11).